Here is a 159-residue protein sequence, read N- to C-terminus: Short coiled-coil protein (159 aa).

Positions M78–S146 form a coiled coil.

It belongs to the SCOC family. In terms of assembly, homodimer. Interacts with ARL1, ARL2 and ARL3. Directly interacts with FEZ1 and UVRAG. The interaction with UVRAG is reduced by amino acid starvation, but the complex is stabilized in the presence of FEZ1. Interacts with NRBF2. In terms of tissue distribution, widely expressed with highest levels in brain, heart and skeletal muscle.

The protein resides in the golgi apparatus membrane. It is found in the golgi apparatus. Its subcellular location is the trans-Golgi network. It localises to the cytoplasm. The protein localises to the cytosol. Functionally, positive regulator of amino acid starvation-induced autophagy. This is Short coiled-coil protein (SCOC) from Homo sapiens (Human).